The sequence spans 78 residues: Vacuolar ATPase assembly integral membrane protein VMA21 (78 aa).

At methionine 1 to valine 14 the chain is on the cytoplasmic side. A helical transmembrane segment spans residues phenylalanine 15 to phenylalanine 35. The Lumenal portion of the chain corresponds to serine 36–asparagine 38. A helical membrane pass occupies residues alanine 39–valine 59. The Cytoplasmic segment spans residues alanine 60 to arginine 78. A Prevents secretion from ER motif is present at residues lysine 75–arginine 78.

This sequence belongs to the VMA21 family.

It localises to the endoplasmic reticulum membrane. Its subcellular location is the endoplasmic reticulum-Golgi intermediate compartment membrane. It is found in the cytoplasmic vesicle. The protein resides in the COPII-coated vesicle membrane. In terms of biological role, required for the assembly of the V0 complex of the vacuolar ATPase (V-ATPase) in the endoplasmic reticulum. This chain is Vacuolar ATPase assembly integral membrane protein VMA21, found in Debaryomyces hansenii (strain ATCC 36239 / CBS 767 / BCRC 21394 / JCM 1990 / NBRC 0083 / IGC 2968) (Yeast).